The chain runs to 70 residues: NAD(P)H-quinone oxidoreductase subunit L (70 aa).

Transmembrane regions (helical) follow at residues 2 to 22 (IVALLYLILAGAYLLVIPIAV) and 39 to 59 (LLMYFLVFFFFPGLLVLSPFA).

The protein belongs to the complex I NdhL subunit family. NDH-1 can be composed of about 15 different subunits; different subcomplexes with different compositions have been identified which probably have different functions.

Its subcellular location is the cellular thylakoid membrane. The enzyme catalyses a plastoquinone + NADH + (n+1) H(+)(in) = a plastoquinol + NAD(+) + n H(+)(out). It carries out the reaction a plastoquinone + NADPH + (n+1) H(+)(in) = a plastoquinol + NADP(+) + n H(+)(out). Functionally, NDH-1 shuttles electrons from an unknown electron donor, via FMN and iron-sulfur (Fe-S) centers, to quinones in the respiratory and/or the photosynthetic chain. The immediate electron acceptor for the enzyme in this species is believed to be plastoquinone. Couples the redox reaction to proton translocation, and thus conserves the redox energy in a proton gradient. Cyanobacterial NDH-1 also plays a role in inorganic carbon-concentration. This Nostoc punctiforme (strain ATCC 29133 / PCC 73102) protein is NAD(P)H-quinone oxidoreductase subunit L.